Here is a 559-residue protein sequence, read N- to C-terminus: DDB1- and CUL4-associated factor 10 (559 aa).

The segment at 1–119 (MFPFGPHSPG…HGLGAGLGGP (119 aa)) is disordered. 4 positions are modified to phosphoserine: serine 53, serine 63, serine 89, and serine 92. Residues 56 to 86 (RPGAPSLSPAPRSGELGLPGAPESSTASAPG) are compositionally biased toward low complexity. Positions 87–97 (EPSPPSPPCRR) are enriched in pro residues. Arginine 134 carries the post-translational modification Omega-N-methylarginine. 4 WD repeats span residues 166-205 (RTHGAVFNLEYSPDGSVLTVACEQTEVLLFDPISSKHIKT), 209-247 (AHEDCVNNIRFLDNRLFATCSDDTTIALWDLRKLNTKVC), 251-290 (GHTSWVKNIEYDTNTRLLVTSGFDGNVIIWDTNRYTEDGC), and 296-335 (FHTRFLMRMRLTPDCSKMLISTSSGYLLILHDLDLTKSLE). Position 349 is a phosphoserine (serine 349). Low complexity predominate over residues 350 to 367 (SSDLTTSSSSSGPRVSGS). The disordered stretch occupies residues 350–396 (SSDLTTSSSSSGPRVSGSPCHHSDSNSSEKHMSRASQREGVSPRNSL). Residues 370–381 (HHSDSNSSEKHM) are compositionally biased toward basic and acidic residues. 3 WD repeats span residues 408–448 (DHGN…QEGA), 470–508 (VGRGYIKELCFSPDGRMISSPHGYGIRLLGFDKQCSELV), and 526–559 (SHNDVVLTTKFSPTHCQIASGCLSGRVSLYQPKF).

The protein belongs to the WD repeat DCAF10 family. In terms of assembly, interacts with DDB1.

It participates in protein modification; protein ubiquitination. Its function is as follows. May function as a substrate receptor for CUL4-DDB1 E3 ubiquitin-protein ligase complex. The polypeptide is DDB1- and CUL4-associated factor 10 (DCAF10) (Homo sapiens (Human)).